The chain runs to 91 residues: Protein xpaR7 (91 aa).

The protein is Protein xpaR7 (xpaR7) of Bacillus licheniformis.